A 327-amino-acid chain; its full sequence is uncharacterized protein (327 aa).

In terms of domain architecture, S4 RNA-binding spans 12–79; the sequence is KRLDEFLAKE…LKKELDLEIE (68 aa). Residue D136 is part of the active site.

This sequence belongs to the pseudouridine synthase RluA family.

The enzyme catalyses a uridine in RNA = a pseudouridine in RNA. This is an uncharacterized protein from Helicobacter pylori (strain ATCC 700392 / 26695) (Campylobacter pylori).